The primary structure comprises 274 residues: Large ribosomal subunit protein uL2 (274 aa).

2 disordered regions span residues 28–54 (APYA…TRHI) and 223–265 (VAMN…KRTD). Over residues 39–48 (KSGGRNNNGR) the composition is skewed to low complexity.

This sequence belongs to the universal ribosomal protein uL2 family. As to quaternary structure, part of the 50S ribosomal subunit. Forms a bridge to the 30S subunit in the 70S ribosome.

Its function is as follows. One of the primary rRNA binding proteins. Required for association of the 30S and 50S subunits to form the 70S ribosome, for tRNA binding and peptide bond formation. It has been suggested to have peptidyltransferase activity; this is somewhat controversial. Makes several contacts with the 16S rRNA in the 70S ribosome. This chain is Large ribosomal subunit protein uL2, found in Alteromonas mediterranea (strain DSM 17117 / CIP 110805 / LMG 28347 / Deep ecotype).